The chain runs to 310 residues: Vomeronasal type-1 receptor 44 (310 aa).

Residues 1-20 (MNKANLLHIDTNIKITLLAE) are Extracellular-facing. The chain crosses the membrane as a helical span at residues 21-41 (VSVGISANSILFIAYLCMLLG). Residues 42–50 (ENRHKPIDL) lie on the Cytoplasmic side of the membrane. The helical transmembrane segment at 51–71 (YIAFLSLTQLMLLITMGLIAV) threads the bilayer. Over 72–93 (DMFMPWGRWDSTTCQSLIYLHR) the chain is Extracellular. The cysteines at positions 85 and 172 are disulfide-linked. Residues 94–114 (FLRGLTLCATCLLNVLWTITL) traverse the membrane as a helical segment. Residues 115-131 (SSRNSCLAKFKHKYPHH) are Cytoplasmic-facing. A helical membrane pass occupies residues 132–152 (ISGAFLFLCVLYMSFSSHFLV). The Extracellular portion of the chain corresponds to 153–190 (SMTVTPNLTSENFMYVTQSCSLLPMSYSRTSMFSTPVA). A glycan (N-linked (GlcNAc...) asparagine) is linked at N159. Residues 191–211 (IRETFLISLMALSSGYMVALL) traverse the membrane as a helical segment. The Cytoplasmic segment spans residues 212 to 238 (WRHKKQAQHLRSTSLSSKASPEQRATR). The chain crosses the membrane as a helical span at residues 239–259 (TILLLMSFFVVFYILDTVIFH). Residues 260–268 (SRMKFKDGS) are Extracellular-facing. Residues 269-289 (ILYCFQIIVSHSYVTVSPFVF) traverse the membrane as a helical segment. Over 290–310 (ICTEKHIIKFLRSMCGRIANI) the chain is Cytoplasmic.

Belongs to the G-protein coupled receptor 1 family.

The protein resides in the cell membrane. Functionally, putative pheromone receptor implicated in the regulation of social and reproductive behavior. This Mus musculus (Mouse) protein is Vomeronasal type-1 receptor 44 (Vmn1r44).